Here is a 463-residue protein sequence, read N- to C-terminus: Casein kinase 1 (463 aa).

One can recognise a Protein kinase domain in the interval 9-278 (FKLGRKIGSG…LKRLFRDLFI (270 aa)). ATP is bound by residues 15–23 (IGSGSFGEL) and Lys38. The Proton acceptor role is filled by Asp128. Positions 296-306 (ESNRLRSSGRT) are enriched in polar residues. Residues 296–448 (ESNRLRSSGR…TARNVHDDPT (153 aa)) are disordered. Positions 315–328 (ERTERAAARQDVPD) are enriched in basic and acidic residues. Composition is skewed to polar residues over residues 376–396 (TSSS…SRPS) and 404–440 (NRSN…TKTA).

It belongs to the protein kinase superfamily. CK1 Ser/Thr protein kinase family. Casein kinase I subfamily. Monomer. Autophosphorylated. As to expression, expressed in leaves, stems, panicles and seeds. Expressed in root tissues and lamina joints.

It is found in the cytoplasm. The protein localises to the nucleus. The catalysed reaction is L-seryl-[protein] + ATP = O-phospho-L-seryl-[protein] + ADP + H(+). It catalyses the reaction L-threonyl-[protein] + ATP = O-phospho-L-threonyl-[protein] + ADP + H(+). With respect to regulation, inhibited by N-(2-aminoethyl)-5-chloroisoquinoline-8-sulfonamide (CKI-7). In terms of biological role, casein kinases are operationally defined by their preferential utilization of acidic proteins such as caseins as substrates. Can phosphorylate casein in vitro. Required for normal root development through modulation of cell elongation. Plants silencing CKI1 show abnormal root development, with reduced number of lateral and adventitious roots, and shortened primary roots as a result of reduced cell elongation. May be involved in abscisic acid (ABA) and brassinosteroid (BR) signaling pathways. Plays an important role in the adaptive growth and fitness under low temperature (LT) conditions. May confer tolerance to LT through an auxin-dependent process. This Oryza sativa subsp. japonica (Rice) protein is Casein kinase 1 (CKI1).